The primary structure comprises 217 residues: L-lactate dehydrogenase B chain (217 aa).

N22 is a binding site for NAD(+). The substrate site is built by N22 and R53. Residue H77 is the Proton acceptor of the active site. Residue Y123 is modified to Phosphotyrosine. T132 lines the substrate pocket. Position 212 is an N6-acetyllysine (K212).

This sequence belongs to the LDH/MDH superfamily. LDH family. As to quaternary structure, homotetramer. Interacts with PTEN upstream reading frame protein MP31; the interaction leads to inhibition of mitochondrial lactate dehydrogenase activity, preventing conversion of lactate to pyruvate in mitochondria.

It localises to the cytoplasm. The protein resides in the mitochondrion inner membrane. The catalysed reaction is (S)-lactate + NAD(+) = pyruvate + NADH + H(+). The protein operates within fermentation; pyruvate fermentation to lactate; (S)-lactate from pyruvate: step 1/1. Its function is as follows. Interconverts simultaneously and stereospecifically pyruvate and lactate with concomitant interconversion of NADH and NAD(+). This chain is L-lactate dehydrogenase B chain (LDHB), found in Oryctolagus cuniculus (Rabbit).